Reading from the N-terminus, the 281-residue chain is uncharacterized protein (281 aa).

A signal peptide spans M1–S23. A lipid anchor (N-palmitoyl cysteine) is attached at C24. Residue C24 is the site of S-diacylglycerol cysteine attachment. The disordered stretch occupies residues H145–E165. The segment covering H150–H161 has biased composition (basic and acidic residues).

The protein resides in the cell membrane. This is an uncharacterized protein from Mycoplasma genitalium (strain ATCC 33530 / DSM 19775 / NCTC 10195 / G37) (Mycoplasmoides genitalium).